The following is a 207-amino-acid chain: Proteasome subunit beta 2 (207 aa).

A propeptide spans 1 to 10 (MLQLTEKFKG) (removed in mature form; by autocatalysis). Thr-11 (nucleophile) is an active-site residue.

This sequence belongs to the peptidase T1B family. The 20S proteasome core is composed of 14 alpha and 14 beta subunits that assemble into four stacked heptameric rings, resulting in a barrel-shaped structure. The two inner rings, each composed of seven catalytic beta subunits, are sandwiched by two outer rings, each composed of seven alpha subunits. The catalytic chamber with the active sites is on the inside of the barrel. Has a gated structure, the ends of the cylinder being occluded by the N-termini of the alpha-subunits. Is capped at one or both ends by the proteasome regulatory ATPase, PAN.

It is found in the cytoplasm. The catalysed reaction is Cleavage of peptide bonds with very broad specificity.. The formation of the proteasomal ATPase PAN-20S proteasome complex, via the docking of the C-termini of PAN into the intersubunit pockets in the alpha-rings, triggers opening of the gate for substrate entry. Interconversion between the open-gate and close-gate conformations leads to a dynamic regulation of the 20S proteasome proteolysis activity. Component of the proteasome core, a large protease complex with broad specificity involved in protein degradation. The protein is Proteasome subunit beta 2 of Pyrococcus abyssi (strain GE5 / Orsay).